The sequence spans 164 residues: Transcriptional regulator MraZ (164 aa).

2 consecutive SpoVT-AbrB domains span residues 7–60 (HYTN…EIDG) and 83–126 (SEIL…EPGR). Positions 144 to 164 (QLSARHAAPDAPPLRSHGARE) are disordered.

Belongs to the MraZ family. In terms of assembly, forms oligomers.

The protein localises to the cytoplasm. The protein resides in the nucleoid. The sequence is that of Transcriptional regulator MraZ from Methylocella silvestris (strain DSM 15510 / CIP 108128 / LMG 27833 / NCIMB 13906 / BL2).